The following is a 340-amino-acid chain: Eukaryotic translation initiation factor 3 subunit I (340 aa).

WD repeat units follow at residues 8–47 (GHER…RLGT), 50–91 (GHQG…KVWD), 150–189 (CTES…QLEN), 194–233 (EFDH…ILKT), and 291–330 (GHFG…FDFM).

The protein belongs to the eIF-3 subunit I family. In terms of assembly, component of the eukaryotic translation initiation factor 3 (eIF-3) complex.

The protein resides in the cytoplasm. Component of the eukaryotic translation initiation factor 3 (eIF-3) complex, which is involved in protein synthesis of a specialized repertoire of mRNAs and, together with other initiation factors, stimulates binding of mRNA and methionyl-tRNAi to the 40S ribosome. The eIF-3 complex specifically targets and initiates translation of a subset of mRNAs involved in cell proliferation. This chain is Eukaryotic translation initiation factor 3 subunit I (tif34), found in Aspergillus fumigatus (strain CBS 144.89 / FGSC A1163 / CEA10) (Neosartorya fumigata).